The sequence spans 365 residues: DNA replication and repair protein RecF (365 aa).

30-37 (GLNGSGKT) contributes to the ATP binding site.

This sequence belongs to the RecF family.

The protein resides in the cytoplasm. Its function is as follows. The RecF protein is involved in DNA metabolism; it is required for DNA replication and normal SOS inducibility. RecF binds preferentially to single-stranded, linear DNA. It also seems to bind ATP. This Cellvibrio japonicus (strain Ueda107) (Pseudomonas fluorescens subsp. cellulosa) protein is DNA replication and repair protein RecF.